The following is a 448-amino-acid chain: Nicotinate phosphoribosyltransferase pncB1 (448 aa).

The interval 1–21 is disordered; it reads MGPPPAARRREGEPDNQDPAG. H212 is modified (phosphohistidine). The tract at residues 353–372 is disordered; it reads RSSYKESPGGRKEALRRSRA.

It belongs to the NAPRTase family. In terms of processing, transiently phosphorylated on a His residue during the reaction cycle. Phosphorylation strongly increases the affinity for substrates and increases the rate of nicotinate D-ribonucleotide production. Dephosphorylation regenerates the low-affinity form of the enzyme, leading to product release.

The enzyme catalyses nicotinate + 5-phospho-alpha-D-ribose 1-diphosphate + ATP + H2O = nicotinate beta-D-ribonucleotide + ADP + phosphate + diphosphate. It functions in the pathway cofactor biosynthesis; NAD(+) biosynthesis; nicotinate D-ribonucleotide from nicotinate: step 1/1. Functionally, involved in the Preiss-Handler pathway, which is a recycling route that permits the salvage of free nicotinamide (NM) and nicotinic acid (Na) involved in the NAD biosynthesis. Catalyzes the synthesis of beta-nicotinate D-ribonucleotide from nicotinate and 5-phospho-D-ribose 1-phosphate at the expense of ATP. It is not able to use nicotinamide. PncB1 contributes to basal NAD level. This is Nicotinate phosphoribosyltransferase pncB1 (pncB1) from Mycobacterium tuberculosis (strain CDC 1551 / Oshkosh).